The following is a 1533-amino-acid chain: DNA topoisomerase 2-alpha (1533 aa).

Residue M1 is modified to N-acetylmethionine. Positions M1 to E22 are disordered. The residue at position 4 (S4) is a Phosphoserine. Over residues Q7 to N16 the composition is skewed to polar residues. K17 participates in a covalent cross-link: Glycyl lysine isopeptide (Lys-Gly) (interchain with G-Cter in SUMO2). Residues N91, N120, and S148–N150 each bind ATP. Residues K156 and K157 each participate in a glycyl lysine isopeptide (Lys-Gly) (interchain with G-Cter in SUMO2) cross-link. G161 to K168 serves as a coordination point for ATP. K261 is covalently cross-linked (Glycyl lysine isopeptide (Lys-Gly) (interchain with G-Cter in SUMO2)). Position 282 is a phosphothreonine (T282). Residues K342–K344 form an interaction with DNA region. A Glycyl lysine isopeptide (Lys-Gly) (interchain with G-Cter in SUMO2) cross-link involves residue K352. Position 376-378 (Q376–K378) interacts with ATP. Glycyl lysine isopeptide (Lys-Gly) (interchain with G-Cter in SUMO2) cross-links involve residues K386, K397, K416, K418, K425, and K440. The Toprim domain occupies C455–E572. A Mg(2+)-binding site is contributed by E461. Residues K466, K480, and K529 each participate in a glycyl lysine isopeptide (Lys-Gly) (interchain with G-Cter in SUMO2) cross-link. Mg(2+) is bound by residues D541 and D543. Residues K584, K599, K614, K622, K625, K632, K639, K655, K662, and K676 each participate in a glycyl lysine isopeptide (Lys-Gly) (interchain with G-Cter in SUMO2) cross-link. Positions I715–L1171 constitute a Topo IIA-type catalytic domain. The active-site O-(5'-phospho-DNA)-tyrosine intermediate is the Y805. The segment at K990 to S999 is interaction with DNA. A Glycyl lysine isopeptide (Lys-Gly) (interchain with G-Cter in SUMO2) cross-link involves residue K1075. Disordered regions lie at residues W1090–S1121 and A1183–C1215. Residues D1099–N1108 are compositionally biased toward acidic residues. S1106 bears the Phosphoserine; by CK1 mark. Glycyl lysine isopeptide (Lys-Gly) (interchain with G-Cter in SUMO2) cross-links involve residues K1114, K1196, and K1204. A Phosphothreonine modification is found at T1205. S1213 is subject to Phosphoserine. Residue K1228 forms a Glycyl lysine isopeptide (Lys-Gly) (interchain with G-Cter in SUMO2) linkage. Positions A1231–F1533 are disordered. K1240 is covalently cross-linked (Glycyl lysine isopeptide (Lys-Gly) (interchain with G-Cter in SUMO1); alternate). K1240 is covalently cross-linked (Glycyl lysine isopeptide (Lys-Gly) (interchain with G-Cter in SUMO2); alternate). The residue at position 1244 (T1244) is a Phosphothreonine. Residue S1247 is modified to Phosphoserine. Residues E1256–T1272 are compositionally biased toward basic and acidic residues. Glycyl lysine isopeptide (Lys-Gly) (interchain with G-Cter in SUMO2) cross-links involve residues K1259, K1276, K1283, and K1286. A phosphoserine mark is found at S1295, S1297, S1299, and S1302. T1327 carries the phosphothreonine modification. 2 positions are modified to phosphoserine: S1332 and S1337. T1343 bears the Phosphothreonine mark. 2 positions are modified to phosphoserine: S1351 and S1354. The segment covering T1360–P1371 has biased composition (basic and acidic residues). Residues K1363, K1367, and K1373 each participate in a glycyl lysine isopeptide (Lys-Gly) (interchain with G-Cter in SUMO2) cross-link. S1374 and S1377 each carry phosphoserine. K1387 is covalently cross-linked (Glycyl lysine isopeptide (Lys-Gly) (interchain with G-Cter in SUMO2)). Phosphoserine occurs at positions 1393 and 1395. Residues K1409–G1433 are compositionally biased toward low complexity. K1424 is covalently cross-linked (Glycyl lysine isopeptide (Lys-Gly) (interchain with G-Cter in SUMO2); alternate). The residue at position 1424 (K1424) is an N6-acetyllysine; alternate. The tract at residues K1435 to K1441 is interaction with PLSCR1. Over residues A1443–K1455 the composition is skewed to basic and acidic residues. K1444 participates in a covalent cross-link: Glycyl lysine isopeptide (Lys-Gly) (interchain with G-Cter in SUMO2); alternate. K1444 carries the N6-acetyllysine; alternate modification. S1451 is subject to Phosphoserine. Residues K1456 and K1461 each participate in a glycyl lysine isopeptide (Lys-Gly) (interchain with G-Cter in SUMO2) cross-link. S1471 carries the post-translational modification Phosphoserine. T1472 carries the phosphothreonine modification. Residues S1473, S1476, and S1478 each carry the phosphoserine modification. Glycyl lysine isopeptide (Lys-Gly) (interchain with G-Cter in SUMO2) cross-links involve residues K1486 and K1494. Residues P1493–L1504 show a composition bias toward basic and acidic residues. A phosphoserine mark is found at S1497 and S1527.

It belongs to the type II topoisomerase family. Homodimer. Interacts with COPS5. Interacts with RECQL5; this stimulates DNA decatenation. Interacts with SETMAR; stimulates the topoisomerase activity. Interacts with DHX9; this interaction occurs in a E2 enzyme UBE2I- and RNA-dependent manner, negatively regulates DHX9-mediated double-stranded DNA and RNA duplex helicase activity and stimulates TOP2A-mediated supercoiled DNA relaxation activity. Interacts with HNRNPU (via C-terminus); this interaction protects the topoisomerase TOP2A from degradation and positively regulates the relaxation of supercoiled DNA in a RNA-dependent manner. Interacts with MCM3AP. Interacts with ERCC6. Interacts with PLSCR1. Interacts with GCNA; this interaction allows the resolution of topoisomerase II (TOP2A) DNA-protein cross-links. Interacts with POL1RA/RPA1 (via dock II) and UBTF in the context of Pol I complex; may assist Pol I transcription initiation by releasing supercoils occurring during DNA unwinding. Interacts with TPRN; TPRN interacts with a number of DNA damage response proteins, is recruited to sites of DNA damage and may play a role in DNA damage repair. Requires Mg(2+) as cofactor. Mn(2+) is required as a cofactor. Ca(2+) serves as cofactor. Post-translationally, phosphorylation has no effect on catalytic activity. However, phosphorylation at Ser-1106 by CSNK1D/CK1 promotes DNA cleavable complex formation.

The protein resides in the cytoplasm. It localises to the nucleus. The protein localises to the nucleoplasm. Its subcellular location is the nucleolus. The enzyme catalyses ATP-dependent breakage, passage and rejoining of double-stranded DNA.. Functionally, key decatenating enzyme that alters DNA topology by binding to two double-stranded DNA molecules, generating a double-stranded break in one of the strands, passing the intact strand through the broken strand, and religating the broken strand. May play a role in regulating the period length of BMAL1 transcriptional oscillation. In Sus scrofa (Pig), this protein is DNA topoisomerase 2-alpha (TOP2A).